The chain runs to 298 residues: Acetylglutamate kinase (298 aa).

Substrate contacts are provided by residues 68-69 (GG), R90, and N195.

The protein belongs to the acetylglutamate kinase family. ArgB subfamily.

It localises to the cytoplasm. It carries out the reaction N-acetyl-L-glutamate + ATP = N-acetyl-L-glutamyl 5-phosphate + ADP. It functions in the pathway amino-acid biosynthesis; L-arginine biosynthesis; N(2)-acetyl-L-ornithine from L-glutamate: step 2/4. Its function is as follows. Catalyzes the ATP-dependent phosphorylation of N-acetyl-L-glutamate. The polypeptide is Acetylglutamate kinase (Hydrogenovibrio crunogenus (strain DSM 25203 / XCL-2) (Thiomicrospira crunogena)).